The chain runs to 142 residues: MKSPHVLVFLCLLVALVTGNLVQFGVMIEKMTGKSALQYNDYGCYCGIGGSHWPVDQTDWCCHAHDCCYGRLEKLGCEPKLEKYLFSVSERGIFCAGRTTCQRLTCECDKRAALCFRRNLGTYNRKYAHYPNKLCTGPTPPC.

Positions 1–19 are cleaved as a signal peptide; sequence MKSPHVLVFLCLLVALVTG. The Ca(2+) site is built by Asp-41, Gly-43, Tyr-45, Gly-47, and Gly-49. Disulfide bonds link Cys-44/Cys-135, Cys-46/Cys-62, Cys-61/Cys-115, Cys-67/Cys-142, Cys-68/Cys-108, Cys-77/Cys-101, and Cys-95/Cys-106. Residue His-65 is part of the active site. Asp-66 lines the Ca(2+) pocket. Residue Asp-109 is part of the active site. Ca(2+)-binding residues include Tyr-130 and Asn-132.

The protein belongs to the phospholipase A2 family. It depends on Ca(2+) as a cofactor. In terms of tissue distribution, restricted to the brain, heart, lung, and placenta.

Its subcellular location is the secreted. It localises to the cytoplasm. It catalyses the reaction a 1,2-diacyl-sn-glycero-3-phosphoethanolamine + H2O = a 1-acyl-sn-glycero-3-phosphoethanolamine + a fatty acid + H(+). It carries out the reaction 1-hexadecanoyl-2-(9Z-octadecenoyl)-sn-glycero-3-phosphoethanolamine + H2O = 1-hexadecanoyl-sn-glycero-3-phosphoethanolamine + (9Z)-octadecenoate + H(+). The enzyme catalyses 1-hexadecanoyl-2-(9Z,12Z-octadecadienoyl)-sn-glycero-3-phosphoethanolamine + H2O = 1-hexadecanoyl-sn-glycero-3-phosphoethanolamine + (9Z,12Z)-octadecadienoate + H(+). The catalysed reaction is 1-hexadecanoyl-2-(5Z,8Z,11Z,14Z-eicosatetraenoyl)-sn-glycero-3-phosphoethanolamine + H2O = 1-hexadecanoyl-sn-glycero-3-phosphoethanolamine + (5Z,8Z,11Z,14Z)-eicosatetraenoate + H(+). It catalyses the reaction 1,2-dihexadecanoyl-sn-glycero-3-phospho-(1'-sn-glycerol) + H2O = 1-hexadecanoyl-sn-glycero-3-phospho-(1'-sn-glycerol) + hexadecanoate + H(+). It carries out the reaction 1-hexadecanoyl-2-(9Z-octadecenoyl)-sn-glycero-3-phosphoglycerol + H2O = 1-hexadecanoyl-sn-glycero-3-phosphoglycerol + (9Z)-octadecenoate + H(+). The enzyme catalyses a 1,2-diacyl-sn-glycero-3-phosphocholine + H2O = a 1-acyl-sn-glycero-3-phosphocholine + a fatty acid + H(+). The catalysed reaction is 1,2-dihexadecanoyl-sn-glycero-3-phosphocholine + H2O = 1-hexadecanoyl-sn-glycero-3-phosphocholine + hexadecanoate + H(+). It catalyses the reaction 1-hexadecanoyl-2-(9Z-octadecenoyl)-sn-glycero-3-phosphocholine + H2O = 1-hexadecanoyl-sn-glycero-3-phosphocholine + (9Z)-octadecenoate + H(+). It carries out the reaction 1-hexadecanoyl-2-(9Z,12Z-octadecadienoyl)-sn-glycero-3-phosphocholine + H2O = (9Z,12Z)-octadecadienoate + 1-hexadecanoyl-sn-glycero-3-phosphocholine + H(+). The enzyme catalyses 1-hexadecanoyl-2-(4Z,7Z,10Z,13Z,16Z,19Z-docosahexaenoyl)-sn-glycero-3-phosphocholine + H2O = (4Z,7Z,10Z,13Z,16Z,19Z)-docosahexaenoate + 1-hexadecanoyl-sn-glycero-3-phosphocholine + H(+). Functionally, secretory calcium-dependent phospholipase A2 that primarily targets extracellular phospholipids. Hydrolyzes the ester bond of the fatty acyl group attached at sn-2 position of phospholipids (phospholipase A2 activity), releasing various unsaturated fatty acids including oleoate, linoleoate, arachidonate, docosahexaenoate and lysophosphatidylethanolamines in preference to lysophosphatidylcholines. In response to high-fat diet, hydrolyzes minor lipoprotein phospholipids including phosphatidylserines, phosphatidylinositols and phosphatidylglycerols, altering lipoprotein composition and fat storage in adipose tissue and liver. May act in an autocrine and paracrine manner. Contributes to lipid remodeling of cellular membranes and generation of lipid mediators involved in pathogen clearance. Cleaves sn-2 fatty acyl chains of phosphatidylglycerols and phosphatidylethanolamines, which are major components of membrane phospholipids in bacteria. Acts as a hair follicle phospholipase A2. Selectively releases lysophosphatidylethanolamines (LPE) and various unsaturated fatty acids in skin to regulate hair follicle homeostasis. May regulate the inflammatory response by releasing arachidonate, a precursor of prostaglandins and leukotrienes. Upon allergen exposure, may participate in allergic inflammatory response by enhancing leukotriene C4 synthesis and degranulation in mast cells. This Homo sapiens (Human) protein is Group IIE secretory phospholipase A2 (PLA2G2E).